The primary structure comprises 479 residues: BURP domain-containing protein 4 (479 aa).

Residues 1–46 (MVGKGNECAAARRRFSLRAAAASSSSSSFLPCLLLAAALSAGCCRA) form the signal peptide. The tract at residues 158–177 (RADGPPKQPATFPASPNGEK) is disordered. Residues 254–479 (LFLMKKLHPG…PQGYVLWLAN (226 aa)) form the BURP domain. Asn-445 carries an N-linked (GlcNAc...) asparagine glycan.

In terms of tissue distribution, expressed in stamen.

This chain is BURP domain-containing protein 4 (BURP4), found in Oryza sativa subsp. japonica (Rice).